Consider the following 392-residue polypeptide: Probable glucan endo-1,6-beta-glucosidase B (392 aa).

Residues 1-18 form the signal peptide; it reads MKVTRLAVLNTLATLTVA. N-linked (GlcNAc...) asparagine glycosylation is present at N31. The active-site Proton donor is E220. E322 (nucleophile) is an active-site residue.

This sequence belongs to the glycosyl hydrolase 5 (cellulase A) family.

It is found in the secreted. It carries out the reaction Random hydrolysis of (1-&gt;6)-linkages in (1-&gt;6)-beta-D-glucans.. In terms of biological role, beta-glucanases participate in the metabolism of beta-glucan, the main structural component of the cell wall. Acts on lutean, pustulan and 1,6-oligo-beta-D-glucosides. This is Probable glucan endo-1,6-beta-glucosidase B (exgB) from Aspergillus flavus (strain ATCC 200026 / FGSC A1120 / IAM 13836 / NRRL 3357 / JCM 12722 / SRRC 167).